Consider the following 468-residue polypeptide: ATP synthase subunit beta (468 aa).

155 to 162 (GGAGVGKT) lines the ATP pocket.

It belongs to the ATPase alpha/beta chains family. In terms of assembly, F-type ATPases have 2 components, CF(1) - the catalytic core - and CF(0) - the membrane proton channel. CF(1) has five subunits: alpha(3), beta(3), gamma(1), delta(1), epsilon(1). CF(0) has three main subunits: a(1), b(2) and c(9-12). The alpha and beta chains form an alternating ring which encloses part of the gamma chain. CF(1) is attached to CF(0) by a central stalk formed by the gamma and epsilon chains, while a peripheral stalk is formed by the delta and b chains.

The protein localises to the cell membrane. The catalysed reaction is ATP + H2O + 4 H(+)(in) = ADP + phosphate + 5 H(+)(out). Its function is as follows. Produces ATP from ADP in the presence of a proton gradient across the membrane. The catalytic sites are hosted primarily by the beta subunits. This is ATP synthase subunit beta from Streptococcus pneumoniae serotype 19F (strain G54).